We begin with the raw amino-acid sequence, 441 residues long: Bacteria-responsive protein 1 (441 aa).

The N-terminal stretch at 1-18 (MWFFKVGALLFLAALVSA) is a signal peptide. Asn-20 carries N-linked (GlcNAc...) asparagine glycosylation. Residues 25–441 (PKVLCYYDGQ…PILRAAKYRL (417 aa)) form the GH18 domain. Cys-29 and Cys-56 are oxidised to a cystine. An N-linked (GlcNAc...) asparagine glycan is attached at Asn-225.

Belongs to the glycosyl hydrolase 18 family. IDGF subfamily. In terms of tissue distribution, salivary gland (at protein level).

The protein localises to the secreted. Its function is as follows. Promotes recruitment of host neutrophils at the bite site. Induces expression of IL1B and IL6 in the skin of the host. (Microbial infection) Enhances Zika virus replication and exacerbates disease pathogenesis in the host. The protein is Bacteria-responsive protein 1 of Aedes aegypti (Yellowfever mosquito).